Here is a 741-residue protein sequence, read N- to C-terminus: Endoplasmic reticulum membrane sensor NFE2L1 (741 aa).

A helical; Signal-anchor for type II membrane protein transmembrane segment spans residues 7 to 24 (YLTEGLLQFTILLSLIGV). Disordered regions lie at residues 108–148 (DPEG…TEQG) and 198–220 (QKEQ…WSGE). A compositionally biased stretch (polar residues) spans 113–131 (VSGSQPNSGLALESSSGLQ). Positions 191–199 (VFDYSHRQK) are cholesterol recognition/amino acid consensus (CRAC) region. Residues 198 to 216 (QKEQDVDKELQDGREREDT) are compositionally biased toward basic and acidic residues. 2 N-linked (GlcNAc...) asparagine glycosylation sites follow: Asn-319 and Asn-331. The interval 350–354 (SPEVE) is CPD. Residue Asn-394 is glycosylated (N-linked (GlcNAc...) asparagine). Disordered regions lie at residues 441–501 (EEEF…DSET) and 551–582 (SALD…QMSR). The Destruction motif motif lies at 447–451 (DSGLS). Positions 447–492 (DSGLSLDSSHSPSSLSSSEGSSSSSSSSSSSSASSSASSSFSEEGA) are enriched in low complexity. Phosphoserine; by CK2 is present on Ser-497. Positions 567–582 (GSKEKQADFLDKQMSR) are enriched in basic and acidic residues. Phosphoserine is present on Ser-568. One can recognise a bZIP domain in the interval 623–686 (LIRDIRRRGK…RQMKQKVQSL (64 aa)). Residues 625 to 644 (RDIRRRGKNKMAAQNCRKRK) are basic motif. Residues 651-665 (LERDVEDLQRDKARL) form a leucine-zipper region. Residues 722–741 (RTMADQQARRQERKPKDRRK) are disordered. Residues 730–737 (RRQERKPK) carry the Nuclear localization signal motif. Basic residues predominate over residues 732-741 (QERKPKDRRK).

The protein belongs to the bZIP family. CNC subfamily. As to quaternary structure, interacts with KEAP1. In terms of assembly, interacts (via CPD region) with FBXW7; leading to its ubiquitination and degradation. Interacts with SYVN1/HRD1; leading to its ubiquitination and degradation. Interacts (when ubiquitinated) with DDI2; leading to its cleavage. Interacts (via the bZIP domain) with small MAF protein (MAFF, MAFG or MAFK); required for binding to antioxidant response elements (AREs) on DNA. Interacts (via Destruction motif) with BTRC; leading to its ubiquitination and degradation. Interacts with CEBPB; the heterodimer represses expression of DSPP during odontoblast differentiation. Interacts with MOTS-c, a peptide produced by the mitochondrially encoded 12S rRNA MT-RNR1. Cleaved at Leu-104 by the aspartyl protease DDI2 following retrotranslocation, releasing the protein from the endoplasmic reticulum membrane and forming the transcription factor NRF1 that translocates into the nucleus. Ubiquitination is prerequisite for cleavage by aspartyl protease DDI2. In terms of processing, N-glycosylated in normal conditions, when it has a single-pass type II membrane protein topology, with the DNA-binding domain facing the endoplasmic reticulum lumen. Deglycosylated during retrotranslocation to the cytosolic side of the membrane, to have a single-pass type III membrane protein topology with the major part of the protein facing the cytosol. Post-translationally, ubiquitinated by the SCF(FBXW7) complex and SYVN1/HRD1, leading to its degradation by the proteasome. Ubiquitinated during retrotranslocation to the cytosolic side of the membrane: ubiquitination does not lead to degradation and is required for processing by the aspartyl protease DDI2 and subsequent release from the endoplasmic reticulum membrane. Phosphorylation by CK2 at Ser-497 inhibits transcription factor activity, possibly by affecting DNA-binding activity. Phosphorylation at Ser-568 is required for interaction with CEBPB. In terms of processing, ubiquitinated by the SCF(BTRC) complex in the nucleus, leading to its degradation by the proteasome. Isoform 1: Widely expressed including kidney, brown fat, white fat, large intestine, small intestine, stomach, lung, brain and liver. Isoform 1: Expressed in mouse embryonic fibroblasts (MEF). Isoform 2: Widely expressed including kidney, brown fat, white fat, large intestine, small intestine, stomach, lung, brain and liver. Isoform 2: levels in white fat, lung and liver are increased compared to isoform 1 (at protein level). Isoform 2: levels are elevated in brown fat and brain, but are reduced in liver compared to isoform 1 levels. Isoform 2: Expressed in mouse embryonic fibroblasts (MEF).

It is found in the endoplasmic reticulum membrane. Its subcellular location is the nucleus. The protein localises to the cytoplasm. In terms of biological role, endoplasmic reticulum membrane sensor that translocates into the nucleus in response to various stresses to act as a transcription factor. Constitutes a precursor of the transcription factor NRF1. Able to detect various cellular stresses, such as cholesterol excess, oxidative stress or proteasome inhibition. In response to stress, it is released from the endoplasmic reticulum membrane following cleavage by the protease DDI2 and translocates into the nucleus to form the transcription factor NRF1. Acts as a key sensor of cholesterol excess: in excess cholesterol conditions, the endoplasmic reticulum membrane form of the protein directly binds cholesterol via its CRAC motif, preventing cleavage and release of the transcription factor NRF1, thereby allowing expression of genes promoting cholesterol removal, such as CD36. Involved in proteasome homeostasis: in response to proteasome inhibition, it is released from the endoplasmic reticulum membrane, translocates to the nucleus and activates expression of genes encoding proteasome subunits. Its function is as follows. CNC-type bZIP family transcription factor that translocates to the nucleus and regulates expression of target genes in response to various stresses. Heterodimerizes with small-Maf proteins (MAFF, MAFG or MAFK) and binds DNA motifs including the antioxidant response elements (AREs), which regulate expression of genes involved in oxidative stress response. Activates or represses expression of target genes, depending on the context. Plays a key role in cholesterol homeostasis by acting as a sensor of cholesterol excess: in low cholesterol conditions, translocates into the nucleus and represses expression of genes involved in defense against cholesterol excess, such as CD36. In excess cholesterol conditions, the endoplasmic reticulum membrane form of the protein directly binds cholesterol via its CRAC motif, preventing cleavage and release of the transcription factor NRF1, thereby allowing expression of genes promoting cholesterol removal. Critical for redox balance in response to oxidative stress: acts by binding the AREs motifs on promoters and mediating activation of oxidative stress response genes, such as GCLC, GCLM, GSS, MT1 and MT2. Plays an essential role during fetal liver hematopoiesis: probably has a protective function against oxidative stress and is involved in lipid homeostasis in the liver. Involved in proteasome homeostasis: in response to proteasome inhibition, mediates the 'bounce-back' of proteasome subunits by translocating into the nucleus and activating expression of genes encoding proteasome subunits. Also involved in regulating glucose flux. Together with CEBPB; represses expression of DSPP during odontoblast differentiation. In response to ascorbic acid induction, activates expression of SP7/Osterix in osteoblasts. Functionally, transcription factor that binds the antioxidant response elements (ARE) consensus sequence on promoters and activates their expression. Transcription factor that binds the extended kappa 3 site of the TNF-alpha promoter after Fc gamma RIII stimulation and participates in the induction of this cytokine. The protein is Endoplasmic reticulum membrane sensor NFE2L1 of Mus musculus (Mouse).